A 248-amino-acid polypeptide reads, in one-letter code: Adenosylcobinamide-GDP ribazoletransferase (248 aa).

7 helical membrane passes run 24–44 (EINL…IGAW), 70–90 (IIIT…GLFS), 106–126 (VGAN…ALFL), 134–154 (IGWL…LLFA), 168–188 (IFLG…LVAL), 189–209 (GAFF…FTII), and 228–248 (AGGQ…WGLI).

It belongs to the CobS family. It depends on Mg(2+) as a cofactor.

It is found in the cell membrane. The catalysed reaction is alpha-ribazole + adenosylcob(III)inamide-GDP = adenosylcob(III)alamin + GMP + H(+). It carries out the reaction alpha-ribazole 5'-phosphate + adenosylcob(III)inamide-GDP = adenosylcob(III)alamin 5'-phosphate + GMP + H(+). The protein operates within cofactor biosynthesis; adenosylcobalamin biosynthesis; adenosylcobalamin from cob(II)yrinate a,c-diamide: step 7/7. In terms of biological role, joins adenosylcobinamide-GDP and alpha-ribazole to generate adenosylcobalamin (Ado-cobalamin). Also synthesizes adenosylcobalamin 5'-phosphate from adenosylcobinamide-GDP and alpha-ribazole 5'-phosphate. The polypeptide is Adenosylcobinamide-GDP ribazoletransferase (Listeria monocytogenes serotype 4a (strain HCC23)).